Consider the following 320-residue polypeptide: MRSAQVYRWQIPMDAGVVLRDRRLKTRDGLYVCLRDGEREGWGEISPLPGFSQETWEEAQTALLTWVNDWLQGSEGLPEMPSVAFGASCALAELTGVLPEAADYRAAPLCTGDPDDLVLRLADMPGEKIAKVKVGLYEAVRDGMVVNLLLEAIPDLHLRLDANRAWTPLKAQQFAKYVNPDYRARIAFLEEPCKTRDDSRAFARETGIAIAWDESLREADFTFEAEEGVRAVVIKPTLTGSLDKVREQVAAAHALGLTAVISSSIESSLGLTQLARIAAWLTPGTLPGLDTLHLMQAQQIRPWPGNALPCLKRDELERLL.

The active-site Proton donor is the Lys-133. Positions 161, 190, and 213 each coordinate Mg(2+). Lys-235 (proton acceptor) is an active-site residue.

The protein belongs to the mandelate racemase/muconate lactonizing enzyme family. MenC type 1 subfamily. A divalent metal cation is required as a cofactor.

The enzyme catalyses (1R,6R)-6-hydroxy-2-succinyl-cyclohexa-2,4-diene-1-carboxylate = 2-succinylbenzoate + H2O. It functions in the pathway quinol/quinone metabolism; 1,4-dihydroxy-2-naphthoate biosynthesis; 1,4-dihydroxy-2-naphthoate from chorismate: step 4/7. Its pathway is quinol/quinone metabolism; menaquinone biosynthesis. Functionally, converts 2-succinyl-6-hydroxy-2,4-cyclohexadiene-1-carboxylate (SHCHC) to 2-succinylbenzoate (OSB). The chain is o-succinylbenzoate synthase from Salmonella paratyphi A (strain ATCC 9150 / SARB42).